The chain runs to 635 residues: MARIRLLDERTANQIAAGEVVERPASVVKELVENALDAQAKRIVVEVSGGGRELVRVTDDGIGMVPEDARLALQRHATSKIRTAEDLNAITTLGFRGEALPSIAAVSQFELITRPHDQLAGYRILAEGGQIVAEGEHGCPAGTRVTVRDLFFNVPARLKYLKTNATELAQIGDILTRLALANPEVAFRFQSGQAQVFATPGTGDLTAAVAALLGREMAKELLPVDYRNDAARVHGFVGRPTIARAGRSHQYFFVNRRAVRTIAARYALEEAYAHLLPNGRYPVCILFIEVEPHEVDVNVHPTKAEVRFQRDREVRAAVYQAARHALGAALLIPGTEVTADGEVRVPDRAEEKAALQRGWVPPGAGRPGEGGGRAAPPPWRVSAGGPGGQTTAREPVQAYLPAGGLQAALAQRAAEEAAAAVPAVDLAEATLVPRSAEPGELIRALRPLGQVHRSYIACDGPEGLYLIDQHAAHERIFFERLYAAAQEQATAVQRLLFPLTLDLTPAQMAIWQENAAIFAESGFEAEPFGGNTLLIHGVPAGLGTDHVARLVCDFLDRLQEDQVAPGTPVTDRRRRVLAAMAACKAAIKARDPLQPEDIAALLSDLAACASPETCPHGRPTVICVSISELEKRFKR.

Positions 352–380 are disordered; sequence KAALQRGWVPPGAGRPGEGGGRAAPPPWR.

Belongs to the DNA mismatch repair MutL/HexB family.

Its function is as follows. This protein is involved in the repair of mismatches in DNA. It is required for dam-dependent methyl-directed DNA mismatch repair. May act as a 'molecular matchmaker', a protein that promotes the formation of a stable complex between two or more DNA-binding proteins in an ATP-dependent manner without itself being part of a final effector complex. The protein is DNA mismatch repair protein MutL of Symbiobacterium thermophilum (strain DSM 24528 / JCM 14929 / IAM 14863 / T).